Reading from the N-terminus, the 823-residue chain is MKLFGFGSRRGQTAQGSIDHVYTGSGYRIRDSELQKIHRAAVKGDAAEVERCLARRSGELDALDKQHRTALHLACASGHVQVVTLLVNRKCQIDVCDKENRTPLIQAVHCQEEACAVILLEHGANPNLKDIYGNTALHYAVYSESTSLAEKLLSHGAHIEALDKDNNTPLLFAIICKKEKMVEFLLKKKASSHAVDRLRRSALMLAVYYDSPGIVNILLKQNIDVFAQDMCGRDAEDYAISHHLTKIQQQILEHKKKILKKEKSDVGSSDESAVSIFHELRVDSLPASDDKDLNVATKQCVPEKVSEPLPGSSHEKGNRIVNGQGEGPPAKHPSLKPSTEVEDPAVKGAVQRKNVQTLRAEQALPVASEEEQQRHERSEKKQPQVKEGNNTNKSEKIQLSENICDSTSSAAAGRLTQQRKIGKTYPQQFPKKLKEEHDRCTLKQENEEKTNVNMLYKKNREELERKEKQYKKEVEAKQLEPTVQSLEMKSKTARNTPNWDFHNHEEMKGLMDENCILKADIAILRQEICTMKNDNLEKENKYLKDIKIVKETNAALEKYIKLNEEMITETAFRYQQELNDLKAENTRLNAELLKEKESKKRLEADIESYQSRLAAAISKHSESVKTERNLKLALERTQDVSVQVEMSSAISKVKDENEFLTEQLSETQIKFNALKDKFRKTRDSLRKKSLALETVQNNLSQTQQQTQEMKEMYQNAEAKVNNSTGKWNCVEERICHLQRENAWLVQQLDDVHQKEDHKEIVTNIQRGFIESGKKDFVLEEKSKKLMNECDHLKESLFQYEREKTEVVVSIKEDKYFQTSRKKI.

ANK repeat units lie at residues 66 to 95 (QHRT…QIDV), 99 to 128 (ENRT…NPNL), 132 to 161 (YGNT…HIEA), 165 to 194 (DNNT…SSHA), and 198 to 227 (LRRS…DVFA). Disordered regions lie at residues 301–343 (VPEK…EVED) and 356–405 (QTLR…NICD). Positions 371 to 384 (EQQRHERSEKKQPQ) are enriched in basic and acidic residues. Coiled coils occupy residues 431–480 (KKLK…KQLE), 565–724 (EMIT…NNST), and 776–806 (FVLE…KTEV).

The polypeptide is Putative ankyrin repeat domain-containing protein 20A4 (Homo sapiens (Human)).